We begin with the raw amino-acid sequence, 210 residues long: Na(+)-translocating NADH-quinone reductase subunit D (210 aa).

The next 6 membrane-spanning stretches (helical) occupy residues 14-34, 42-62, 72-92, 103-123, 131-151, and 178-198; these read PIVS…ALAV, LVMT…ISML, IIVQ…VLQA, VFVG…AYAM, FMDG…VGFV, and NGLL…IWII.

Belongs to the NqrDE/RnfAE family. Composed of six subunits; NqrA, NqrB, NqrC, NqrD, NqrE and NqrF.

The protein localises to the cell inner membrane. The enzyme catalyses a ubiquinone + n Na(+)(in) + NADH + H(+) = a ubiquinol + n Na(+)(out) + NAD(+). Functionally, NQR complex catalyzes the reduction of ubiquinone-1 to ubiquinol by two successive reactions, coupled with the transport of Na(+) ions from the cytoplasm to the periplasm. NqrA to NqrE are probably involved in the second step, the conversion of ubisemiquinone to ubiquinol. The chain is Na(+)-translocating NADH-quinone reductase subunit D from Shewanella woodyi (strain ATCC 51908 / MS32).